A 468-amino-acid polypeptide reads, in one-letter code: Flavin-containing monooxygenase FMO GS-OX-like 1 (468 aa).

16 to 21 (GLGAAG) contacts FAD. Residue 211 to 216 (GSQASG) coordinates NADP(+).

The protein belongs to the FMO family. Requires FAD as cofactor.

Catalyzes the conversion of methylthioalkyl glucosinolates of any chain length into methylsulfinylalkyl glucosinolates. The sequence is that of Flavin-containing monooxygenase FMO GS-OX-like 1 from Arabidopsis thaliana (Mouse-ear cress).